The sequence spans 186 residues: Protein YABBY 2 (186 aa).

Residues 17-44 (CNFCNTIFAVSVPSNSMLNIVTVRCGHC) form a C4-type zinc finger.

Belongs to the YABBY family. As to expression, expressed in leaf blades, leaf sheaths and flowers.

It is found in the nucleus. In Oryza sativa subsp. japonica (Rice), this protein is Protein YABBY 2 (YAB2).